Here is a 395-residue protein sequence, read N- to C-terminus: GPI-anchor transamidase (395 aa).

Positions 1 to 27 (MVGTWFLCRGFTTLAGLLLLPFGSLAA) are cleaved as a signal peptide. The Lumenal portion of the chain corresponds to 28-368 (SQIEDQAEQF…PKLKDWHPPG (341 aa)). Ca(2+)-binding residues include aspartate 79, isoleucine 82, glutamate 118, and aspartate 120. The active-site Proton donor is the histidine 164. The active-site Nucleophile; acyl-thioester intermediate is the cysteine 206. A protein-binding residues include cysteine 206, serine 232, and serine 234. An autoinhibitory loop region spans residues 231–236 (DSLSHQ). Cysteines 275 and 280 form a disulfide. A helical membrane pass occupies residues 369-385 (GFILGLWALIIMVFFKT). The Cytoplasmic segment spans residues 386–395 (YGIKHMKFIF).

The protein belongs to the peptidase C13 family. Heteropentamer. Part of the GPI-anchor transamidase complex, consisting of PIGK, PIGT, PIGS, PIGU and GAA1. Interacts with GPAA1. Interacts with PIGT; this interaction, via a disulfide link, stabilizes the expression of GAA1 and PIGK and links them to PIGS. Post-translationally, the disulfide bond between PIGK/GPI8 and PIGT is important for normal enzyme activity.

Its subcellular location is the endoplasmic reticulum membrane. Its pathway is glycolipid biosynthesis; glycosylphosphatidylinositol-anchor biosynthesis. In the absence of proproteins substrates, exists in an inactive state with a disrupted catalytic site by an autoinhibitory loop. The binding of proprotein substrates, particularly the CSP region, to GPI-T triggers concerted conformational changes that alleviate the inhibition by the autoinhibitory loop. Meanwhile, proprotein residues near the omega- site induce the formation of a catalytic cleft for catalysis, following which the products are released and GPI-T reverts to the inactive state. Its function is as follows. Catalytic subunit of the glycosylphosphatidylinositol-anchor (GPI-anchor) transamidase (GPI-T) complex that catalyzes the formation of the linkage between a proprotein and a GPI-anchor and participates in GPI anchored protein biosynthesis. Recognizes diverse proproteins at a C-terminal signal peptide (CSP) region that lacks consensus sequence and replaces it with a GPI-anchor via a transamidation reaction. Transamidation catalysis reaction follows a two-phase mechanism. In the acyl-enzyme phase, the carbonyl group of the proproteins's omega-site undergoes a nucleophilic attack forming an enzyme-substrate thioester bond. Followed by a general acid catalysis that allows CSP releasing, regenerating the carbonyl, and forming the acyl-enzyme intermediate. In the GPI-anchor attachment phase, the amino group of the GPI-anchor's ethanolamine phosphate, the one on third mannose (EtNP3), mediates a nucleophilic attack on the carbonyl of the acyl-enzyme intermediate, replacing the CSP, allowing GPI-anchor attachment to the omega-residue, therefore forming the product and freeing the enzyme. The sequence is that of GPI-anchor transamidase from Sus scrofa (Pig).